A 428-amino-acid chain; its full sequence is Tyrosine--tRNA ligase (428 aa).

Tyrosine 36 contributes to the L-tyrosine binding site. The 'HIGH' region motif lies at 41–50; sequence PTARSLHIGS. 2 residues coordinate L-tyrosine: tyrosine 169 and glutamine 173. The short motif at 229–233 is the 'KMSKS' region element; that stretch reads KMGKT. Lysine 232 contributes to the ATP binding site. The region spanning 361 to 427 is the S4 RNA-binding domain; it reads IPAYEIMHEC…GKKKYMIIKV (67 aa).

It belongs to the class-I aminoacyl-tRNA synthetase family. TyrS type 1 subfamily. Homodimer.

It localises to the cytoplasm. It catalyses the reaction tRNA(Tyr) + L-tyrosine + ATP = L-tyrosyl-tRNA(Tyr) + AMP + diphosphate + H(+). Functionally, catalyzes the attachment of tyrosine to tRNA(Tyr) in a two-step reaction: tyrosine is first activated by ATP to form Tyr-AMP and then transferred to the acceptor end of tRNA(Tyr). The polypeptide is Tyrosine--tRNA ligase (Syntrophus aciditrophicus (strain SB)).